The sequence spans 264 residues: MTHTPQSGTAYRARLEARAGRLAGPTANLAPGHVQANLAILPADVAGDFLRFCQRNPKPCPLLAVSEPGDPALPSLGHDIDVRSDIPRYRVWRDGQLAGEPTDVRDLWRDDLVAFLIGCSFSFEEAMLDNGLPVRHIEQGCNVPMYRTSIPTEPAGPFRGPLVVSMRPLKAADAIRAIQVTSRFPSVHGAPVHLGDPAQIGIADINRPDYGDAVEIRPGEIPVFWACGVTPQSVVAAVRPKFCITHAPGHMLVTDLLNSRMAVL.

It belongs to the D-glutamate cyclase family.

The protein is Putative hydro-lyase Bpet2233 of Bordetella petrii (strain ATCC BAA-461 / DSM 12804 / CCUG 43448).